A 694-amino-acid chain; its full sequence is Polyribonucleotide nucleotidyltransferase (694 aa).

Residues aspartate 485 and aspartate 491 each coordinate Mg(2+). One can recognise a KH domain in the interval 552–611; sequence PRIETMQIKPNKIATVIGPGGKQIRQIIEEAGVQIDINDSGLVSISASSPQAIEKAKSII. The S1 motif domain occupies 621-689; it reads GKIYEGRVTS…EKGQYKLSHK (69 aa).

It belongs to the polyribonucleotide nucleotidyltransferase family. Requires Mg(2+) as cofactor.

Its subcellular location is the cytoplasm. It catalyses the reaction RNA(n+1) + phosphate = RNA(n) + a ribonucleoside 5'-diphosphate. Functionally, involved in mRNA degradation. Catalyzes the phosphorolysis of single-stranded polyribonucleotides processively in the 3'- to 5'-direction. In Chlamydia felis (strain Fe/C-56) (Chlamydophila felis), this protein is Polyribonucleotide nucleotidyltransferase.